The sequence spans 362 residues: Biotin synthase (362 aa).

Positions 46 to 273 (NEVQVSTLLS…ASHVRLSAGR (228 aa)) constitute a Radical SAM core domain. [4Fe-4S] cluster is bound by residues cysteine 61, cysteine 65, and cysteine 68. Positions 105, 136, 196, and 268 each coordinate [2Fe-2S] cluster. Positions 320-339 (PAQRAQKPDQVQEEELLAEV) are disordered.

Belongs to the radical SAM superfamily. Biotin synthase family. As to quaternary structure, homodimer. [4Fe-4S] cluster is required as a cofactor. Requires [2Fe-2S] cluster as cofactor.

The catalysed reaction is (4R,5S)-dethiobiotin + (sulfur carrier)-SH + 2 reduced [2Fe-2S]-[ferredoxin] + 2 S-adenosyl-L-methionine = (sulfur carrier)-H + biotin + 2 5'-deoxyadenosine + 2 L-methionine + 2 oxidized [2Fe-2S]-[ferredoxin]. It participates in cofactor biosynthesis; biotin biosynthesis; biotin from 7,8-diaminononanoate: step 2/2. Functionally, catalyzes the conversion of dethiobiotin (DTB) to biotin by the insertion of a sulfur atom into dethiobiotin via a radical-based mechanism. In Aeromonas hydrophila subsp. hydrophila (strain ATCC 7966 / DSM 30187 / BCRC 13018 / CCUG 14551 / JCM 1027 / KCTC 2358 / NCIMB 9240 / NCTC 8049), this protein is Biotin synthase.